Consider the following 252-residue polypeptide: Hydroxyacylglutathione hydrolase (252 aa).

Residues His54, His56, Asp58, His59, His113, Asp132, and His170 each coordinate Zn(2+).

This sequence belongs to the metallo-beta-lactamase superfamily. Glyoxalase II family. Monomer. It depends on Zn(2+) as a cofactor.

The catalysed reaction is an S-(2-hydroxyacyl)glutathione + H2O = a 2-hydroxy carboxylate + glutathione + H(+). It functions in the pathway secondary metabolite metabolism; methylglyoxal degradation; (R)-lactate from methylglyoxal: step 2/2. Functionally, thiolesterase that catalyzes the hydrolysis of S-D-lactoyl-glutathione to form glutathione and D-lactic acid. This chain is Hydroxyacylglutathione hydrolase, found in Synechococcus sp. (strain JA-3-3Ab) (Cyanobacteria bacterium Yellowstone A-Prime).